Here is a 211-residue protein sequence, read N- to C-terminus: Superoxide dismutase [Mn] (211 aa).

4 residues coordinate Mn(2+): His27, His82, Asp165, and His169.

This sequence belongs to the iron/manganese superoxide dismutase family. As to quaternary structure, homodimer. Requires Mn(2+) as cofactor.

It carries out the reaction 2 superoxide + 2 H(+) = H2O2 + O2. Functionally, destroys superoxide anion radicals which are normally produced within the cells and which are toxic to biological systems. This chain is Superoxide dismutase [Mn] (sodA), found in Bordetella pertussis (strain Tohama I / ATCC BAA-589 / NCTC 13251).